A 119-amino-acid polypeptide reads, in one-letter code: Large ribosomal subunit protein bL20 (119 aa).

This sequence belongs to the bacterial ribosomal protein bL20 family.

Functionally, binds directly to 23S ribosomal RNA and is necessary for the in vitro assembly process of the 50S ribosomal subunit. It is not involved in the protein synthesizing functions of that subunit. This chain is Large ribosomal subunit protein bL20, found in Buchnera aphidicola subsp. Cinara cedri (strain Cc).